The primary structure comprises 235 residues: Glycerol-3-phosphate acyltransferase (235 aa).

Transmembrane regions (helical) follow at residues 4–24, 56–76, 94–114, 122–142, 152–172, and 191–211; these read LLAILAVSYIIGSIPTSLVAG, VVTLIDIVKGVVAAVSVVAFF, LLAGMSAVIGHVFTLFAGFKG, AGMLIGIAPVSMLMVVGIFLL, VASMLAAIAFPLIIAIRKYIF, and FHDSLDYHLMIFGLIVALAIL.

This sequence belongs to the PlsY family. As to quaternary structure, probably interacts with PlsX.

It is found in the cell inner membrane. It carries out the reaction an acyl phosphate + sn-glycerol 3-phosphate = a 1-acyl-sn-glycero-3-phosphate + phosphate. It functions in the pathway lipid metabolism; phospholipid metabolism. Functionally, catalyzes the transfer of an acyl group from acyl-phosphate (acyl-PO(4)) to glycerol-3-phosphate (G3P) to form lysophosphatidic acid (LPA). This enzyme utilizes acyl-phosphate as fatty acyl donor, but not acyl-CoA or acyl-ACP. The sequence is that of Glycerol-3-phosphate acyltransferase from Pelodictyon phaeoclathratiforme (strain DSM 5477 / BU-1).